Reading from the N-terminus, the 138-residue chain is uncharacterized protein (138 aa).

This is an uncharacterized protein from Escherichia coli (strain K12).